Reading from the N-terminus, the 399-residue chain is MERAGARGQRCGRRSHGLPLALRLALLLAGSPSGRAGAPEEQEIAGSGTVAPAGGDRCRGYYDVMGQWDPPFNCSSGVYSFCCGTCGYRFCCHDGPRRLDQSRCSNYDTPAWVQTGRPPARARDTAAPRDPARERSHTAVYAVCGVAALLVLVGIGARLGLERAHSPRARRTVTRTLTELLKQPGPQEPLPPPLGPPLGNCVQVQMGDGVLRGSPHNSTDKKRLNNAPLGSATPGPPRGPRLQGGGSLTLQPDYAKFATLKAAALKATEVAPQDFYQRFPSTETGPRTLPARVPRPPEDLPALLDACPWAPPGYVPPAGPVSSVPYAAWTAGRPARPLPRSHLVAQVSPAPRRPNHAPRRQFSVEKLPEAFSAQQASFYSSAGRGPRHLSTNSKAEVTV.

The N-terminal stretch at 1-36 (MERAGARGQRCGRRSHGLPLALRLALLLAGSPSGRA) is a signal peptide. Residues 37–136 (GAPEEQEIAG…APRDPARERS (100 aa)) lie on the Extracellular side of the membrane. Residue asparagine 73 is glycosylated (N-linked (GlcNAc...) asparagine). Residues 137–157 (HTAVYAVCGVAALLVLVGIGA) form a helical membrane-spanning segment. At 158 to 399 (RLGLERAHSP…STNSKAEVTV (242 aa)) the chain is on the cytoplasmic side. 2 disordered regions span residues 207-248 (GDGV…GGSL) and 378-399 (FYSSAGRGPRHLSTNSKAEVTV). Positions 389–399 (LSTNSKAEVTV) are enriched in polar residues.

It belongs to the shisa family. As to quaternary structure, interacts with AMPAR subunits GRIA1 and GRIA2. As to expression, brain-specific. Highly expressed in cerebellum and olfactory bulb.

It localises to the membrane. May regulate trafficking and current kinetics of AMPA-type glutamate receptor (AMPAR) at synapses. In Mus musculus (Mouse), this protein is Protein shisa-8.